Here is a 201-residue protein sequence, read N- to C-terminus: Recombination protein RecR (201 aa).

The segment at 60–75 (CSCCGNVDTIDPCTVC) adopts a C4-type zinc-finger fold. The Toprim domain occupies 83-178 (SVIIVVEDVS…KITRLAHGVP (96 aa)).

This sequence belongs to the RecR family.

Its function is as follows. May play a role in DNA repair. It seems to be involved in an RecBC-independent recombinational process of DNA repair. It may act with RecF and RecO. The polypeptide is Recombination protein RecR (Agrobacterium fabrum (strain C58 / ATCC 33970) (Agrobacterium tumefaciens (strain C58))).